Reading from the N-terminus, the 257-residue chain is MPRLKFTLAYVGTAYHGWQTQRRKSLPELPTIQSTLEKVIASIIGKPVRVCGAGRTDAGVHAEGQVAHVDIPESKLKLDWQLVLNASLPKNIRVVHSLYVEDTFHAQHDAVQKLYAYRLWLNHRYTPPVLYPFVWSCGRLDLEAMDKASTFLLGTHNFVSLQNRGTKLLSTVRTISALYREPSQFFSLNESHEVTWFFKADGFLKQMVRNIMGLLVLVGRRKIQPEKIPYILEAKDRRHSAPTAPAHGLTLKKVFYS.

D57 acts as the Nucleophile in catalysis. Substrate is bound at residue Y115.

This sequence belongs to the tRNA pseudouridine synthase TruA family. In terms of assembly, homodimer.

It catalyses the reaction uridine(38/39/40) in tRNA = pseudouridine(38/39/40) in tRNA. Functionally, formation of pseudouridine at positions 38, 39 and 40 in the anticodon stem and loop of transfer RNAs. This Lawsonia intracellularis (strain PHE/MN1-00) protein is tRNA pseudouridine synthase A.